The primary structure comprises 255 residues: Imidazole glycerol phosphate synthase subunit HisF (255 aa).

Residues aspartate 12 and aspartate 131 contribute to the active site.

The protein belongs to the HisA/HisF family. As to quaternary structure, heterodimer of HisH and HisF.

The protein localises to the cytoplasm. The enzyme catalyses 5-[(5-phospho-1-deoxy-D-ribulos-1-ylimino)methylamino]-1-(5-phospho-beta-D-ribosyl)imidazole-4-carboxamide + L-glutamine = D-erythro-1-(imidazol-4-yl)glycerol 3-phosphate + 5-amino-1-(5-phospho-beta-D-ribosyl)imidazole-4-carboxamide + L-glutamate + H(+). It functions in the pathway amino-acid biosynthesis; L-histidine biosynthesis; L-histidine from 5-phospho-alpha-D-ribose 1-diphosphate: step 5/9. In terms of biological role, IGPS catalyzes the conversion of PRFAR and glutamine to IGP, AICAR and glutamate. The HisF subunit catalyzes the cyclization activity that produces IGP and AICAR from PRFAR using the ammonia provided by the HisH subunit. In Ignicoccus hospitalis (strain KIN4/I / DSM 18386 / JCM 14125), this protein is Imidazole glycerol phosphate synthase subunit HisF.